The sequence spans 198 residues: Transcription factor BHLH133 (198 aa).

The segment at 114–127 (SAESSQSYYAKNRR) is basic motif; degenerate. In terms of domain architecture, bHLH spans 114-163 (SAESSQSYYAKNRRQRINERLRILQELIPNGTKVDISTMLEEAIQYVKFL). The tract at residues 128–163 (QRINERLRILQELIPNGTKVDISTMLEEAIQYVKFL) is helix-loop-helix motif.

This sequence belongs to the bHLH protein family.

The protein localises to the nucleus. Its function is as follows. Transcription factor that acts as a regulator of iron homeostasis. May act as negative regulator of iron transportation from root to shoot. Does not seem to be involved in the suppression of the induction of iron deficiency responsive genes. In Oryza sativa subsp. japonica (Rice), this protein is Transcription factor BHLH133.